A 265-amino-acid polypeptide reads, in one-letter code: Glutamate racemase (265 aa).

Substrate contacts are provided by residues 9-10 (DS) and 41-42 (YG). Cys-72 acts as the Proton donor/acceptor in catalysis. Position 73-74 (73-74 (NT)) interacts with substrate. The Proton donor/acceptor role is filled by Cys-183. 184-185 (TH) contacts substrate.

Belongs to the aspartate/glutamate racemases family.

It carries out the reaction L-glutamate = D-glutamate. The protein operates within cell wall biogenesis; peptidoglycan biosynthesis. Its function is as follows. Provides the (R)-glutamate required for cell wall biosynthesis. This is Glutamate racemase from Lysinibacillus sphaericus (Bacillus sphaericus).